The following is a 363-amino-acid chain: 3-isopropylmalate dehydrogenase (363 aa).

An NAD(+)-binding site is contributed by 76–89; it reads GPKWDTLPGHLRPE. 4 residues coordinate substrate: Arg96, Arg106, Arg134, and Asp223. Mg(2+) is bound by residues Asp223, Asp247, and Asp251. 281 to 293 is an NAD(+) binding site; sequence GSAPDIAGKGVAN.

The protein belongs to the isocitrate and isopropylmalate dehydrogenases family. LeuB type 1 subfamily. As to quaternary structure, homodimer. The cofactor is Mg(2+). It depends on Mn(2+) as a cofactor.

The protein localises to the cytoplasm. The enzyme catalyses (2R,3S)-3-isopropylmalate + NAD(+) = 4-methyl-2-oxopentanoate + CO2 + NADH. Its pathway is amino-acid biosynthesis; L-leucine biosynthesis; L-leucine from 3-methyl-2-oxobutanoate: step 3/4. In terms of biological role, catalyzes the oxidation of 3-carboxy-2-hydroxy-4-methylpentanoate (3-isopropylmalate) to 3-carboxy-4-methyl-2-oxopentanoate. The product decarboxylates to 4-methyl-2 oxopentanoate. The protein is 3-isopropylmalate dehydrogenase of Halalkalibacterium halodurans (strain ATCC BAA-125 / DSM 18197 / FERM 7344 / JCM 9153 / C-125) (Bacillus halodurans).